Here is a 460-residue protein sequence, read N- to C-terminus: ATP synthase subunit beta (460 aa).

Residue 150 to 157 (GGAGVGKT) coordinates ATP.

It belongs to the ATPase alpha/beta chains family. As to quaternary structure, F-type ATPases have 2 components, CF(1) - the catalytic core - and CF(0) - the membrane proton channel. CF(1) has five subunits: alpha(3), beta(3), gamma(1), delta(1), epsilon(1). CF(0) has three main subunits: a(1), b(2) and c(9-12). The alpha and beta chains form an alternating ring which encloses part of the gamma chain. CF(1) is attached to CF(0) by a central stalk formed by the gamma and epsilon chains, while a peripheral stalk is formed by the delta and b chains.

The protein localises to the cell inner membrane. It catalyses the reaction ATP + H2O + 4 H(+)(in) = ADP + phosphate + 5 H(+)(out). Produces ATP from ADP in the presence of a proton gradient across the membrane. The catalytic sites are hosted primarily by the beta subunits. This Salmonella gallinarum (strain 287/91 / NCTC 13346) protein is ATP synthase subunit beta.